Reading from the N-terminus, the 986-residue chain is Ephrin type-A receptor 4 (986 aa).

Residues 1–19 (MAGVPVGALLPLLVGVCGA) form the signal peptide. The Extracellular segment spans residues 20–547 (VTGSRVYPAN…PIIGDGTNPT (528 aa)). The Eph LBD domain maps to 30 to 209 (EVTLLDSRSV…FYKKCPLTVR (180 aa)). Asn235, Asn340, and Asn408 each carry an N-linked (GlcNAc...) asparagine glycan. Fibronectin type-III domains follow at residues 328–439 (PPSA…TNQA) and 440–537 (APSP…TVPS). Residues 548 to 569 (VLLVSVAGSVVLVVILIAAFVI) traverse the membrane as a helical segment. The Cytoplasmic segment spans residues 570–986 (SRRRSKYSKA…QQMHGRMVPV (417 aa)). Residues Tyr596 and Tyr602 each carry the phosphotyrosine; by autocatalysis modification. The Protein kinase domain occupies 621 to 882 (IKIEKVIGVG…QIVNMLDKLI (262 aa)). ATP is bound by residues 627-635 (IGVGEFGEV) and Lys653. Residue Asp746 is the Proton acceptor of the active site. A phosphotyrosine; by autocatalysis mark is found at Tyr779 and Tyr928. An SAM domain is found at 911–975 (SAVVSVSDWL…LSSVQAMRSQ (65 aa)). The PDZ-binding motif lies at 984-986 (VPV).

This sequence belongs to the protein kinase superfamily. Tyr protein kinase family. Ephrin receptor subfamily. In terms of assembly, interacts with the src family kinase, p59-Fyn, through the major phosphorylation site at position Tyr-602. Interacts (via PDZ motif) with SIPA1L1 (via PDZ domain); controls neuronal morphology through regulation of the RAP1 (RAP1A or RAP1B) and RAP2 (RAP2A, RAP2B or RAP2C) GTPases. Expressed at high levels in brain, with expression also detected in the kidney, lung, muscle and thymus.

The protein resides in the cell membrane. The protein localises to the early endosome. The enzyme catalyses L-tyrosyl-[protein] + ATP = O-phospho-L-tyrosyl-[protein] + ADP + H(+). Receptor tyrosine kinase which binds membrane-bound ephrin family ligands residing on adjacent cells, leading to contact-dependent bidirectional signaling into neighboring cells. The signaling pathway downstream of the receptor is referred to as forward signaling while the signaling pathway downstream of the ephrin ligand is referred to as reverse signaling. Highly promiscuous, it has the unique property among Eph receptors to bind and to be physiologically activated by both GPI-anchored ephrin-A and transmembrane ephrin-B ligands including EFNA1 and EFNB3. Upon activation by ephrin ligands, modulates cell morphology and integrin-dependent cell adhesion through regulation of the Rac, Rap and Rho GTPases activity. Plays an important role in the development of the nervous system controlling different steps of axonal guidance including the establishment of the corticospinal projections. In Gallus gallus (Chicken), this protein is Ephrin type-A receptor 4 (EPHA4).